Consider the following 253-residue polypeptide: 5'-nucleotidase SurE 2 (253 aa).

A divalent metal cation contacts are provided by D8, D9, S39, and N92.

This sequence belongs to the SurE nucleotidase family. It depends on a divalent metal cation as a cofactor.

The protein localises to the cytoplasm. It carries out the reaction a ribonucleoside 5'-phosphate + H2O = a ribonucleoside + phosphate. Nucleotidase that shows phosphatase activity on nucleoside 5'-monophosphates. This Burkholderia lata (strain ATCC 17760 / DSM 23089 / LMG 22485 / NCIMB 9086 / R18194 / 383) protein is 5'-nucleotidase SurE 2.